The sequence spans 118 residues: UPF0102 protein Swit_0572 (118 aa).

The protein belongs to the UPF0102 family.

This Rhizorhabdus wittichii (strain DSM 6014 / CCUG 31198 / JCM 15750 / NBRC 105917 / EY 4224 / RW1) (Sphingomonas wittichii) protein is UPF0102 protein Swit_0572.